The primary structure comprises 230 residues: Putative transcription factor bHLH107 (230 aa).

In terms of domain architecture, bHLH spans 44-93 (ASLRNHKEAERKRRARINSHLNKLRKLLSCNSKTDKSTLLAKVVQRVKEL).

In terms of assembly, homodimer.

It localises to the nucleus. The polypeptide is Putative transcription factor bHLH107 (BHLH107) (Arabidopsis thaliana (Mouse-ear cress)).